Consider the following 299-residue polypeptide: Diaminopimelate epimerase (299 aa).

Asn15, Gln47, and Asn67 together coordinate substrate. Catalysis depends on Cys76, which acts as the Proton donor. Residues 77 to 78 (GN), Asn163, Asn197, and 215 to 216 (ER) contribute to the substrate site. The active-site Proton acceptor is Cys224. Residue 225 to 226 (GS) coordinates substrate.

Belongs to the diaminopimelate epimerase family. Homodimer.

Its subcellular location is the cytoplasm. It catalyses the reaction (2S,6S)-2,6-diaminopimelate = meso-2,6-diaminopimelate. The protein operates within amino-acid biosynthesis; L-lysine biosynthesis via DAP pathway; DL-2,6-diaminopimelate from LL-2,6-diaminopimelate: step 1/1. Catalyzes the stereoinversion of LL-2,6-diaminopimelate (L,L-DAP) to meso-diaminopimelate (meso-DAP), a precursor of L-lysine and an essential component of the bacterial peptidoglycan. The chain is Diaminopimelate epimerase from Agrobacterium fabrum (strain C58 / ATCC 33970) (Agrobacterium tumefaciens (strain C58)).